Consider the following 260-residue polypeptide: Hydroxyethylthiazole kinase (260 aa).

Met38 provides a ligand contact to substrate. 2 residues coordinate ATP: Arg114 and Thr159. Gly186 contacts substrate.

Belongs to the Thz kinase family. Mg(2+) is required as a cofactor.

It catalyses the reaction 5-(2-hydroxyethyl)-4-methylthiazole + ATP = 4-methyl-5-(2-phosphooxyethyl)-thiazole + ADP + H(+). Its pathway is cofactor biosynthesis; thiamine diphosphate biosynthesis; 4-methyl-5-(2-phosphoethyl)-thiazole from 5-(2-hydroxyethyl)-4-methylthiazole: step 1/1. Functionally, catalyzes the phosphorylation of the hydroxyl group of 4-methyl-5-beta-hydroxyethylthiazole (THZ). The protein is Hydroxyethylthiazole kinase of Helicobacter pylori (strain HPAG1).